Here is a 93-residue protein sequence, read N- to C-terminus: Putative protein adenylyltransferase MJ0435 (93 aa).

The short motif at 26–40 is the GSX(10)DXD motif element; that stretch reads GSYARNEQKETSDID. Mg(2+) contacts are provided by D38, D40, and D70.

The protein belongs to the MntA antitoxin family. Probably forms a complex with cognate toxin MJ0434. Requires Mg(2+) as cofactor.

The enzyme catalyses L-tyrosyl-[protein] + ATP = O-(5'-adenylyl)-L-tyrosyl-[protein] + diphosphate. The catalysed reaction is O-(5'-adenylyl)-L-tyrosyl-[protein] + ATP = O-[5'-(adenylyl-(5'-&gt;3')-adenylyl)]-L-tyrosyl-[protein] + diphosphate. Functionally, probable antitoxin component of a putative type VII toxin-antitoxin (TA) system. Neutralizes cognate toxic MJ0434 by di-AMPylation. This is Putative protein adenylyltransferase MJ0435 from Methanocaldococcus jannaschii (strain ATCC 43067 / DSM 2661 / JAL-1 / JCM 10045 / NBRC 100440) (Methanococcus jannaschii).